The primary structure comprises 492 residues: Cytochrome P450 26A1 (492 aa).

Heme is bound at residue cysteine 437.

It belongs to the cytochrome P450 family. Heme is required as a cofactor. Expressed primarily in ovary, brain and eyes.

It localises to the endoplasmic reticulum membrane. Its subcellular location is the microsome membrane. It carries out the reaction all-trans-retinoate + reduced [NADPH--hemoprotein reductase] + O2 = all-trans-(4S)-hydroxyretinoate + oxidized [NADPH--hemoprotein reductase] + H2O + H(+). Its function is as follows. A cytochrome P450 monooxygenase involved in the metabolism of all-trans retinoic acid (atRA), a signaling molecule that binds to retinoic acid receptors and regulates gene transcription. May regulate at-RA signaling during hindbrain development. Mechanistically, uses molecular oxygen inserting one oxygen atom into a substrate, and reducing the second into a water molecule, with two electrons provided by NADPH via cytochrome P450 reductase (CPR; NADPH-ferrihemoprotein reductase). Catalyzes the hydroxylation of carbon hydrogen bonds of atRA primarily at C-4. Has no activity toward 9-cis and 13-cis retinoic acid stereoisomers. May play a role in the oxidative metabolism of xenobiotics such as tazarotenic acid. The chain is Cytochrome P450 26A1 (cyp26a1) from Xenopus laevis (African clawed frog).